Reading from the N-terminus, the 172-residue chain is Adenylate kinase isoenzyme 6 (172 aa).

Glycine 13, glycine 15, lysine 16, threonine 17, and threonine 18 together coordinate ATP. The interval asparagine 33 to leucine 56 is NMPbind. The tract at residues threonine 108–aspartate 118 is LID. Arginine 109 is an ATP binding site.

The protein belongs to the adenylate kinase family. AK6 subfamily. As to quaternary structure, monomer and homodimer. Interacts with small ribosomal subunit protein uS11. Not a structural component of 43S pre-ribosomes, but transiently interacts with them by binding to uS11. Interacts with COIL (via C-terminus).

It localises to the cytoplasm. The protein localises to the nucleus. It is found in the nucleoplasm. Its subcellular location is the cajal body. It catalyses the reaction AMP + ATP = 2 ADP. It carries out the reaction ATP + H2O = ADP + phosphate + H(+). Its function is as follows. Broad-specificity nucleoside monophosphate (NMP) kinase that catalyzes the reversible transfer of the terminal phosphate group between nucleoside triphosphates and monophosphates. Also has ATPase activity. Involved in the late cytoplasmic maturation steps of the 40S ribosomal particles, specifically 18S rRNA maturation. While NMP activity is not required for ribosome maturation, ATPase activity is. Associates transiently with small ribosomal subunit protein uS11. ATP hydrolysis breaks the interaction with uS11. May temporarily remove uS11 from the ribosome to enable a conformational change of the ribosomal RNA that is needed for the final maturation step of the small ribosomal subunit. Its NMP activity may have a role in nuclear energy homeostasis. May be involved in regulation of Cajal body (CB) formation. In Mus musculus (Mouse), this protein is Adenylate kinase isoenzyme 6.